The chain runs to 472 residues: 6-phosphogluconate dehydrogenase, decarboxylating (472 aa).

Residues 10-15 (GMAVMG), 33-35 (NRT), 74-76 (VQA), and Asn-102 contribute to the NADP(+) site. Substrate is bound by residues Asn-102 and 128 to 130 (SGG). Lys-184 serves as the catalytic Proton acceptor. 187–188 (HN) contacts substrate. Glu-191 serves as the catalytic Proton donor. Residues Tyr-192, Lys-262, Arg-289, Arg-447, and His-453 each contribute to the substrate site.

This sequence belongs to the 6-phosphogluconate dehydrogenase family. Homodimer.

It carries out the reaction 6-phospho-D-gluconate + NADP(+) = D-ribulose 5-phosphate + CO2 + NADPH. The protein operates within carbohydrate degradation; pentose phosphate pathway; D-ribulose 5-phosphate from D-glucose 6-phosphate (oxidative stage): step 3/3. Catalyzes the oxidative decarboxylation of 6-phosphogluconate to ribulose 5-phosphate and CO(2), with concomitant reduction of NADP to NADPH. The protein is 6-phosphogluconate dehydrogenase, decarboxylating (gnd) of Lactococcus lactis subsp. lactis (strain IL1403) (Streptococcus lactis).